A 364-amino-acid chain; its full sequence is MKSFLLLFCLAQLCSCRSIPLDPIAGYKEPACDDPDTEQAALAAVDYINKHLPRGYKHTLNQIDSVKVWPRRPTGEVYDIEIDTLETTCHVLDPTPLVNCSVRQQTEHAVEGDCDIHVLKQDGQFSVLFTKCDSSPDSAEDVRKLCPDCPLLAPLNNSQVVHAAEVALATFNAQNNGSYFQLVEISRAQFVPLPGSVSVEFAVAATDCIAKEVVDPTKCNLLAEKQYGFCKGSVIQKALGGEDVTVTCTLFQTQPVIPQPQPEGAEAGAPSAVPDAAVPDAAVPAPSAAGLPVGSVVAGPSVVAVPLPLHRAHYDLRHTFSGVASVESASGEAFHVGKTPIVGQPSVPGGPVHLCPGRIRYFKI.

The or 17 signal peptide spans 1-15 (MKSFLLLFCLAQLCS). A Cystatin fetuin-A-type 1 domain is found at 27–133 (YKEPACDDPD…QFSVLFTKCD (107 aa)). 6 disulfides stabilise this stretch: cysteine 32-cysteine 355, cysteine 89-cysteine 100, cysteine 114-cysteine 132, cysteine 146-cysteine 149, cysteine 208-cysteine 219, and cysteine 230-cysteine 248. Asparagine 99 carries N-linked (GlcNAc...) asparagine glycosylation. 3 positions are modified to phosphoserine: serine 134, serine 135, and serine 138. Positions 144-256 (KLCPDCPLLA…TCTLFQTQPV (113 aa)) constitute a Cystatin fetuin-A-type 2 domain. Asparagine 156 and asparagine 176 each carry an N-linked (GlcNAc...) asparagine glycan. O-linked (GalNAc...) serine glycosylation is present at serine 301. Position 319 is a phosphothreonine (threonine 319). Phosphoserine is present on residues serine 321, serine 325, serine 328, and serine 330. A glycan (O-linked (GalNAc...) threonine) is linked at threonine 339.

Belongs to the fetuin family. In terms of processing, phosphorylated by FAM20C in the extracellular medium.

The protein resides in the secreted. The protein is Alpha-2-HS-glycoprotein (AHSG) of Ovis aries (Sheep).